The chain runs to 117 residues: Large ribosomal subunit protein uL18 (117 aa).

The protein belongs to the universal ribosomal protein uL18 family. As to quaternary structure, part of the 50S ribosomal subunit; part of the 5S rRNA/L5/L18/L25 subcomplex. Contacts the 5S and 23S rRNAs.

This is one of the proteins that bind and probably mediate the attachment of the 5S RNA into the large ribosomal subunit, where it forms part of the central protuberance. The polypeptide is Large ribosomal subunit protein uL18 (Nitrosococcus oceani (strain ATCC 19707 / BCRC 17464 / JCM 30415 / NCIMB 11848 / C-107)).